Here is a 473-residue protein sequence, read N- to C-terminus: Photosystem II CP43 reaction center protein (473 aa).

A propeptide spanning residues 1–14 (MKILYSLRRFYHVE) is cleaved from the precursor. N-acetylthreonine is present on Thr-15. Thr-15 carries the post-translational modification Phosphothreonine. 5 helical membrane passes run 69–93 (LFEVAHFVPEKPMYEQGLILLPHLA), 134–155 (LLGPETLEESFPFFGYVWKDRN), 178–200 (KALYFGGVYDTWAPGGGDVRKIT), 255–275 (KPFAWARRAFVWSGEAYLSYS), and 291–312 (WFNNTAYPSEFYGPTGPEASQA). Glu-367 lines the [CaMn4O5] cluster pocket. A helical transmembrane segment spans residues 447-471 (RARAAAAGFEKGIDRDLEPVLYMTP).

This sequence belongs to the PsbB/PsbC family. PsbC subfamily. In terms of assembly, PSII is composed of 1 copy each of membrane proteins PsbA, PsbB, PsbC, PsbD, PsbE, PsbF, PsbH, PsbI, PsbJ, PsbK, PsbL, PsbM, PsbT, PsbX, PsbY, PsbZ, Psb30/Ycf12, at least 3 peripheral proteins of the oxygen-evolving complex and a large number of cofactors. It forms dimeric complexes. Binds multiple chlorophylls and provides some of the ligands for the Ca-4Mn-5O cluster of the oxygen-evolving complex. It may also provide a ligand for a Cl- that is required for oxygen evolution. PSII binds additional chlorophylls, carotenoids and specific lipids. is required as a cofactor.

The protein localises to the plastid. Its subcellular location is the chloroplast thylakoid membrane. Its function is as follows. One of the components of the core complex of photosystem II (PSII). It binds chlorophyll and helps catalyze the primary light-induced photochemical processes of PSII. PSII is a light-driven water:plastoquinone oxidoreductase, using light energy to abstract electrons from H(2)O, generating O(2) and a proton gradient subsequently used for ATP formation. The protein is Photosystem II CP43 reaction center protein of Sorghum bicolor (Sorghum).